The following is a 261-amino-acid chain: Nickel import ATP-binding protein NikD (261 aa).

The ABC transporter domain occupies 6-248; it reads LRIEGLTIAT…PRHDATRALV (243 aa). 41–48 serves as a coordination point for ATP; the sequence is GASGSGKS.

This sequence belongs to the ABC transporter superfamily. Nickel importer (TC 3.A.1.5.3) family. In terms of assembly, the complex is composed of two ATP-binding proteins (NikD and NikE), two transmembrane proteins (NikB and NikC) and a solute-binding protein (NikA).

The protein resides in the cell inner membrane. The enzyme catalyses Ni(2+)(out) + ATP + H2O = Ni(2+)(in) + ADP + phosphate + H(+). Functionally, part of the ABC transporter complex NikABCDE involved in nickel import. Responsible for energy coupling to the transport system. In Rhodospirillum rubrum (strain ATCC 11170 / ATH 1.1.1 / DSM 467 / LMG 4362 / NCIMB 8255 / S1), this protein is Nickel import ATP-binding protein NikD.